Consider the following 206-residue polypeptide: MKLDVITLDAGKAGDIDLSDDIFGLEPRADLLHRVVRWQRAKAQAGTHSVLGKSDVSYSTKKIYRQKGTGGARHGSRKAPIFRHGGVYKGPTPRSHAFDLPKKVRALGLKHALSAKAAAGELVVVDSLNIAEAKTAAVAKAVKENGWKRVLVIDGAEVNENFARAARNLEGVDVLPSMGANVYDILRRDTLVLTRAGVEALEARLK.

This sequence belongs to the universal ribosomal protein uL4 family. In terms of assembly, part of the 50S ribosomal subunit.

In terms of biological role, one of the primary rRNA binding proteins, this protein initially binds near the 5'-end of the 23S rRNA. It is important during the early stages of 50S assembly. It makes multiple contacts with different domains of the 23S rRNA in the assembled 50S subunit and ribosome. Functionally, forms part of the polypeptide exit tunnel. This Paracoccus denitrificans (strain Pd 1222) protein is Large ribosomal subunit protein uL4.